Reading from the N-terminus, the 418-residue chain is Light-independent protochlorophyllide reductase subunit N (418 aa).

[4Fe-4S] cluster-binding residues include C17, C42, and C103.

It belongs to the BchN/ChlN family. In terms of assembly, protochlorophyllide reductase is composed of three subunits; ChlL, ChlN and ChlB. Forms a heterotetramer of two ChlB and two ChlN subunits. The cofactor is [4Fe-4S] cluster.

It carries out the reaction chlorophyllide a + oxidized 2[4Fe-4S]-[ferredoxin] + 2 ADP + 2 phosphate = protochlorophyllide a + reduced 2[4Fe-4S]-[ferredoxin] + 2 ATP + 2 H2O. It participates in porphyrin-containing compound metabolism; chlorophyll biosynthesis (light-independent). Its function is as follows. Component of the dark-operative protochlorophyllide reductase (DPOR) that uses Mg-ATP and reduced ferredoxin to reduce ring D of protochlorophyllide (Pchlide) to form chlorophyllide a (Chlide). This reaction is light-independent. The NB-protein (ChlN-ChlB) is the catalytic component of the complex. This is Light-independent protochlorophyllide reductase subunit N from Prochlorococcus marinus (strain MIT 9303).